A 94-amino-acid chain; its full sequence is Transcription factor PRE6 (94 aa).

Residues 1-20 (MSSRRSSRSRQSGSSRISDD) form a disordered region. Positions 6–60 (SSRSRQSGSSRISDDQISDLVSKLQHLIPELRRRRSDKVSASKVLQETCNYIRNL) constitute a bHLH domain.

This sequence belongs to the bHLH protein family. In terms of assembly, interacts with HFR1.

It localises to the cytoplasm. Its subcellular location is the nucleus. Atypical and probable non DNA-binding bHLH transcription factor that regulates light-mediated responses in day light conditions by binding and inhibiting the activity of the bHLH transcription factor HFR1, a critical regulator of light signaling and shade avoidance. Forms non-functional heterodimers with HFR1, causing liberation and activation of PIF4 from the transcriptionally inactive HFR1-PIF4 complex. The chain is Transcription factor PRE6 (PRE6) from Arabidopsis thaliana (Mouse-ear cress).